Reading from the N-terminus, the 511-residue chain is GMP synthase [glutamine-hydrolyzing] (511 aa).

Residues 5-195 form the Glutamine amidotransferase type-1 domain; that stretch reads DIIVLDFGSQ…AKYICDCEST (191 aa). The Nucleophile role is filled by Cys82. Residues His169 and Glu171 contribute to the active site. Residues 196 to 386 enclose the GMPS ATP-PPase domain; sequence WNMGNFAKIK…LGLSPDLVYR (191 aa). 223-229 is an ATP binding site; the sequence is SGGVDSS.

In terms of assembly, homodimer.

The catalysed reaction is XMP + L-glutamine + ATP + H2O = GMP + L-glutamate + AMP + diphosphate + 2 H(+). Its pathway is purine metabolism; GMP biosynthesis; GMP from XMP (L-Gln route): step 1/1. Catalyzes the synthesis of GMP from XMP. In Campylobacter hominis (strain ATCC BAA-381 / DSM 21671 / CCUG 45161 / LMG 19568 / NCTC 13146 / CH001A), this protein is GMP synthase [glutamine-hydrolyzing].